We begin with the raw amino-acid sequence, 240 residues long: Mitochondrial transcription rescue factor 1 (240 aa).

A mitochondrion-targeting transit peptide spans 1 to 83 (MAVPGVRLLT…ECYFPFSIRL (83 aa)). The disordered stretch occupies residues 92 to 127 (STKKTLQKEADEEDSDEETSYPERSEQEEELESEPG). Residues 101–124 (ADEEDSDEETSYPERSEQEEELES) show a composition bias toward acidic residues. Ser-106 and Ser-116 each carry phosphoserine. The S4 RNA-binding domain maps to 142–217 (FRYDVILKTG…LKKVYEEKTE (76 aa)).

Monomer. Interacts with POLRMT. Interacts (via S4 domain) with MTRFR (via C-terminus). Associates with mitoribosomal S39 large subunit, peptidyl tRNA and nascent chain.

The protein localises to the mitochondrion matrix. Its function is as follows. Mitochondrial RNA-binding protein involved in mitochondrial transcription regulation. Functions as a protective factor to maintain proper mitochondrial RNA level during stress. Acts at the transcription level and its protective function depends on its RNA binding ability. Part of a mitoribosome-associated quality control pathway that prevents aberrant translation by responding to interruptions during elongation. As heterodimer with MTRF, ejects the unfinished nascent chain and peptidyl transfer RNA (tRNA), respectively, from stalled ribosomes. Recruitment of mitoribosome biogenesis factors to these quality control intermediates suggests additional roles for MTRES1 and MTRF during mitoribosome rescue. The sequence is that of Mitochondrial transcription rescue factor 1 (Mtres1) from Mus musculus (Mouse).